The chain runs to 393 residues: Riboflavin biosynthesis protein RibBA (393 aa).

The DHBP synthase stretch occupies residues 1–200 (MQFDNIDSAL…IDDLIEYRKK (200 aa)). D-ribulose 5-phosphate is bound by residues 27-28 (RE), D32, 139-143 (RNGHT), and E163. E28 lines the Mg(2+) pocket. Mg(2+) is bound at residue H142. A GTP cyclohydrolase II region spans residues 201-393 (LEPEIEFKAK…TKKIKMGHLI (193 aa)). 249-253 (RLHSA) provides a ligand contact to GTP. Residues C254, C265, and C267 each coordinate Zn(2+). Residues Q270, 291–293 (EGR), and T313 each bind GTP. The Proton acceptor; for GTP cyclohydrolase activity role is filled by D325. The active-site Nucleophile; for GTP cyclohydrolase activity is R327. 2 residues coordinate GTP: S348 and K353.

In the N-terminal section; belongs to the DHBP synthase family. The protein in the C-terminal section; belongs to the GTP cyclohydrolase II family. Requires Mg(2+) as cofactor. The cofactor is Mn(2+). It depends on Zn(2+) as a cofactor.

It catalyses the reaction D-ribulose 5-phosphate = (2S)-2-hydroxy-3-oxobutyl phosphate + formate + H(+). It carries out the reaction GTP + 4 H2O = 2,5-diamino-6-hydroxy-4-(5-phosphoribosylamino)-pyrimidine + formate + 2 phosphate + 3 H(+). Its pathway is cofactor biosynthesis; riboflavin biosynthesis; 2-hydroxy-3-oxobutyl phosphate from D-ribulose 5-phosphate: step 1/1. The protein operates within cofactor biosynthesis; riboflavin biosynthesis; 5-amino-6-(D-ribitylamino)uracil from GTP: step 1/4. In terms of biological role, catalyzes the conversion of D-ribulose 5-phosphate to formate and 3,4-dihydroxy-2-butanone 4-phosphate. Catalyzes the conversion of GTP to 2,5-diamino-6-ribosylamino-4(3H)-pyrimidinone 5'-phosphate (DARP), formate and pyrophosphate. This Staphylococcus aureus (strain MRSA252) protein is Riboflavin biosynthesis protein RibBA.